The sequence spans 343 residues: Lumican (343 aa).

Positions 1 to 18 (MTLNSLPIFLVLISGIFC) are cleaved as a signal peptide. Pyrrolidone carboxylic acid is present on Q19. Residues Y20 and Y22 each carry the sulfotyrosine modification. Residues 31 to 69 (DPFGPSTAVCAPECNCPLSYPTAMYCDNLKLKTIPIVPS) form the LRRNT domain. 8 LRR repeats span residues 70–91 (GIKY…TFDN), 94–117 (DLQW…VFSK), 120–140 (NLKK…PLPK), 141–162 (TLDD…ALEG), 165–186 (NLTV…GAFK), 190–211 (SLLY…LPHS), 212–232 (LLML…YFQG), and 235–255 (TLQY…PGNV). An N-linked (GlcNAc...) (keratan sulfate) asparagine glycan is attached at N91. The N-linked (GlcNAc...) (keratan sulfate) asparagine glycan is linked to N130. N-linked (GlcNAc...) (keratan sulfate) asparagine glycosylation occurs at N165. Residue N257 is glycosylated (N-linked (GlcNAc...) (keratan sulfate) asparagine). LRR repeat units lie at residues 260–281 (SLVE…SENL), 282–301 (ENFY…SFCK), and 310–330 (KITH…PQEM). Cysteines 300 and 333 form a disulfide. N-linked (GlcNAc...) asparagine glycosylation occurs at N320.

This sequence belongs to the small leucine-rich proteoglycan (SLRP) family. SLRP class II subfamily. Binds to laminin. Post-translationally, contains keratan sulfate. In terms of tissue distribution, cornea and other tissues.

It localises to the secreted. It is found in the extracellular space. The protein localises to the extracellular matrix. The polypeptide is Lumican (LUM) (Gallus gallus (Chicken)).